We begin with the raw amino-acid sequence, 302 residues long: MESNVHIPILLNEVLSAFNLKETDVVIDLTLGRAGHSQEMLKKIPKGLLIGIDKDKSAITFSKEKLEQIGSNFKLFHSDFSKISDLLKELKISKVNAILIDLGISSPQIDNANRGFSYNKESRLDMRMNLDQKLDAHFIVNSYSEEQLKNLLYRNAEIKNSRQIAKIITSNRPIETTLQLSVILKKYLPAFIVRKKDPSKAVFQALRVEVNDEINSLNFLLKNLVSILEENGKVAIITFNSIEDRIVKKYFGSFIKDDVLAFLPTKKEKEFEVKTYLPSKKELEENPRSKSAKMRVLKKIER.

S-adenosyl-L-methionine is bound by residues 34 to 36, Asp-53, Phe-80, Asp-101, and Gln-108; that span reads AGH. The segment at 283 to 302 is disordered; that stretch reads LEENPRSKSAKMRVLKKIER. Basic residues predominate over residues 290–302; that stretch reads KSAKMRVLKKIER.

It belongs to the methyltransferase superfamily. RsmH family.

It localises to the cytoplasm. It catalyses the reaction cytidine(1402) in 16S rRNA + S-adenosyl-L-methionine = N(4)-methylcytidine(1402) in 16S rRNA + S-adenosyl-L-homocysteine + H(+). In terms of biological role, specifically methylates the N4 position of cytidine in position 1402 (C1402) of 16S rRNA. This Mycoplasma mobile (strain ATCC 43663 / 163K / NCTC 11711) (Mesomycoplasma mobile) protein is Ribosomal RNA small subunit methyltransferase H.